The sequence spans 284 residues: 2-dehydro-3-deoxyphosphooctonate aldolase (284 aa).

It belongs to the KdsA family.

Its subcellular location is the cytoplasm. It catalyses the reaction D-arabinose 5-phosphate + phosphoenolpyruvate + H2O = 3-deoxy-alpha-D-manno-2-octulosonate-8-phosphate + phosphate. It participates in carbohydrate biosynthesis; 3-deoxy-D-manno-octulosonate biosynthesis; 3-deoxy-D-manno-octulosonate from D-ribulose 5-phosphate: step 2/3. Its pathway is bacterial outer membrane biogenesis; lipopolysaccharide biosynthesis. This Salmonella paratyphi A (strain ATCC 9150 / SARB42) protein is 2-dehydro-3-deoxyphosphooctonate aldolase.